The chain runs to 307 residues: Elongation factor Ts (307 aa).

The interval 80 to 83 (TDFV) is involved in Mg(2+) ion dislocation from EF-Tu.

It belongs to the EF-Ts family.

Its subcellular location is the cytoplasm. Its function is as follows. Associates with the EF-Tu.GDP complex and induces the exchange of GDP to GTP. It remains bound to the aminoacyl-tRNA.EF-Tu.GTP complex up to the GTP hydrolysis stage on the ribosome. In Variovorax paradoxus (strain S110), this protein is Elongation factor Ts.